Consider the following 278-residue polypeptide: Cell division protein FtsQ (278 aa).

The Cytoplasmic segment spans residues 1–6 (MNATLR). Residues 7 to 27 (ILAWLIAVALVALPVVAVLNG) traverse the membrane as a helical segment. Topologically, residues 28–278 (WVGAERWPLA…SPFAIPGFKT (251 aa)) are periplasmic. Residues 34-103 (WPLARLRVSG…DVLEVHVVEH (70 aa)) enclose the POTRA domain.

Belongs to the FtsQ/DivIB family. FtsQ subfamily. Part of a complex composed of FtsB, FtsL and FtsQ.

The protein resides in the cell inner membrane. Its function is as follows. Essential cell division protein. May link together the upstream cell division proteins, which are predominantly cytoplasmic, with the downstream cell division proteins, which are predominantly periplasmic. May control correct divisome assembly. The protein is Cell division protein FtsQ of Xanthomonas campestris pv. campestris (strain ATCC 33913 / DSM 3586 / NCPPB 528 / LMG 568 / P 25).